The primary structure comprises 109 residues: uncharacterized protein (109 aa).

The next 2 membrane-spanning stretches (helical) occupy residues 18–38 and 48–68; these read TTLAWTRTAFALLVNGVLLTL and AGLIPAGLAGAAASCCYVIAL.

It localises to the cell membrane. This is an uncharacterized protein from Mycobacterium tuberculosis (strain CDC 1551 / Oshkosh).